Consider the following 275-residue polypeptide: Polyamine aminopropyltransferase (275 aa).

A PABS domain is found at 2 to 235 (ELWFTEKQTK…GLWTFTIGSK (234 aa)). Residue Gln31 coordinates S-methyl-5'-thioadenosine. Residues His62 and Asp86 each contribute to the spermidine site. Residues Glu106 and 137–138 (DG) contribute to the S-methyl-5'-thioadenosine site. Residue Asp155 is the Proton acceptor of the active site. 155 to 158 (DSTE) provides a ligand contact to spermidine. Pro162 lines the S-methyl-5'-thioadenosine pocket.

It belongs to the spermidine/spermine synthase family. As to quaternary structure, homodimer or homotetramer.

It is found in the cytoplasm. The enzyme catalyses S-adenosyl 3-(methylsulfanyl)propylamine + putrescine = S-methyl-5'-thioadenosine + spermidine + H(+). Its pathway is amine and polyamine biosynthesis; spermidine biosynthesis; spermidine from putrescine: step 1/1. Its function is as follows. Catalyzes the irreversible transfer of a propylamine group from the amino donor S-adenosylmethioninamine (decarboxy-AdoMet) to putrescine (1,4-diaminobutane) to yield spermidine. This chain is Polyamine aminopropyltransferase, found in Bacillus cytotoxicus (strain DSM 22905 / CIP 110041 / 391-98 / NVH 391-98).